We begin with the raw amino-acid sequence, 507 residues long: Carnosic acid synthase (507 aa).

A helical membrane pass occupies residues 6-23; the sequence is VFSLAFLAAWFIVVFPRW. Cysteine 450 is a binding site for heme.

Belongs to the cytochrome P450 family. Requires heme as cofactor. As to expression, expressed in glandular trichomes of young leaves.

It is found in the membrane. It catalyses the reaction 11-hydroxyferruginol + 3 reduced [NADPH--hemoprotein reductase] + 3 O2 = carnosate + 3 oxidized [NADPH--hemoprotein reductase] + 4 H2O + 4 H(+). It carries out the reaction miltiradiene + 2 reduced [NADPH--hemoprotein reductase] + 2 O2 = miltiradien-20-al + 2 oxidized [NADPH--hemoprotein reductase] + 3 H2O + 2 H(+). The catalysed reaction is ferruginol + 3 reduced [NADPH--hemoprotein reductase] + 3 O2 = pisiferate + 3 oxidized [NADPH--hemoprotein reductase] + 4 H2O + 4 H(+). The protein operates within secondary metabolite biosynthesis; terpenoid biosynthesis. Its function is as follows. Monooxygenase involved in the biosynthesis of carnosate, a potent antioxidant labdane-related diterpene natural product. Catalyzes the oxidation of 11-hydroxyferruginol to produce carnosate. Mediates the conversion of miltiradien into miltiradien-20-al. Also involved in the production of pisiferic acid and derivative products from ferruginol. The sequence is that of Carnosic acid synthase from Rosmarinus officinalis (Rosemary).